A 262-amino-acid chain; its full sequence is Tryptophan synthase alpha chain (262 aa).

Active-site proton acceptor residues include Glu47 and Asp58.

The protein belongs to the TrpA family. As to quaternary structure, tetramer of two alpha and two beta chains.

It carries out the reaction (1S,2R)-1-C-(indol-3-yl)glycerol 3-phosphate + L-serine = D-glyceraldehyde 3-phosphate + L-tryptophan + H2O. Its pathway is amino-acid biosynthesis; L-tryptophan biosynthesis; L-tryptophan from chorismate: step 5/5. The alpha subunit is responsible for the aldol cleavage of indoleglycerol phosphate to indole and glyceraldehyde 3-phosphate. In Chromobacterium violaceum (strain ATCC 12472 / DSM 30191 / JCM 1249 / CCUG 213 / NBRC 12614 / NCIMB 9131 / NCTC 9757 / MK), this protein is Tryptophan synthase alpha chain.